A 540-amino-acid polypeptide reads, in one-letter code: Bifunctional purine biosynthesis protein PurH (540 aa).

Positions 1-144 (MKRALISVYD…KNYQDVGVVV (144 aa)) constitute an MGS-like domain. Residues 204-224 (ETAPERPIGADPGPQKPAAPS) form a disordered region.

This sequence belongs to the PurH family.

It catalyses the reaction (6R)-10-formyltetrahydrofolate + 5-amino-1-(5-phospho-beta-D-ribosyl)imidazole-4-carboxamide = 5-formamido-1-(5-phospho-D-ribosyl)imidazole-4-carboxamide + (6S)-5,6,7,8-tetrahydrofolate. It carries out the reaction IMP + H2O = 5-formamido-1-(5-phospho-D-ribosyl)imidazole-4-carboxamide. It participates in purine metabolism; IMP biosynthesis via de novo pathway; 5-formamido-1-(5-phospho-D-ribosyl)imidazole-4-carboxamide from 5-amino-1-(5-phospho-D-ribosyl)imidazole-4-carboxamide (10-formyl THF route): step 1/1. It functions in the pathway purine metabolism; IMP biosynthesis via de novo pathway; IMP from 5-formamido-1-(5-phospho-D-ribosyl)imidazole-4-carboxamide: step 1/1. This chain is Bifunctional purine biosynthesis protein PurH, found in Symbiobacterium thermophilum (strain DSM 24528 / JCM 14929 / IAM 14863 / T).